A 355-amino-acid chain; its full sequence is Phosphoribosylformylglycinamidine cyclo-ligase (355 aa).

Belongs to the AIR synthase family.

Its subcellular location is the cytoplasm. The catalysed reaction is 2-formamido-N(1)-(5-O-phospho-beta-D-ribosyl)acetamidine + ATP = 5-amino-1-(5-phospho-beta-D-ribosyl)imidazole + ADP + phosphate + H(+). The protein operates within purine metabolism; IMP biosynthesis via de novo pathway; 5-amino-1-(5-phospho-D-ribosyl)imidazole from N(2)-formyl-N(1)-(5-phospho-D-ribosyl)glycinamide: step 2/2. The polypeptide is Phosphoribosylformylglycinamidine cyclo-ligase (Hamiltonella defensa subsp. Acyrthosiphon pisum (strain 5AT)).